A 445-amino-acid polypeptide reads, in one-letter code: Tubulin beta chain (445 aa).

8 residues coordinate GTP: Q11, E69, S138, G142, T143, G144, N204, and N226. E69 provides a ligand contact to Mg(2+). The interval 426–445 (QDATAEEEGEFEEEEGDVEA) is disordered. A compositionally biased stretch (acidic residues) spans 429 to 445 (TAEEEGEFEEEEGDVEA).

The protein belongs to the tubulin family. In terms of assembly, dimer of alpha and beta chains. A typical microtubule is a hollow water-filled tube with an outer diameter of 25 nm and an inner diameter of 15 nM. Alpha-beta heterodimers associate head-to-tail to form protofilaments running lengthwise along the microtubule wall with the beta-tubulin subunit facing the microtubule plus end conferring a structural polarity. Microtubules usually have 13 protofilaments but different protofilament numbers can be found in some organisms and specialized cells. Interacts with DCX/apicortin; the interaction stabilizes microtubule assembly. It depends on Mg(2+) as a cofactor.

Its subcellular location is the cytoplasm. The protein resides in the cytoskeleton. Functionally, tubulin is the major constituent of microtubules, a cylinder consisting of laterally associated linear protofilaments composed of alpha- and beta-tubulin heterodimers. Microtubules grow by the addition of GTP-tubulin dimers to the microtubule end, where a stabilizing cap forms. Below the cap, tubulin dimers are in GDP-bound state, owing to GTPase activity of alpha-tubulin. The polypeptide is Tubulin beta chain (Plasmodium falciparum (isolate 3D7)).